Reading from the N-terminus, the 373-residue chain is Flagellar P-ring protein (373 aa).

The first 26 residues, 1–26 (MRLLFRFLTLVAVLAMSLADVAPAWA), serve as a signal peptide directing secretion.

This sequence belongs to the FlgI family. In terms of assembly, the basal body constitutes a major portion of the flagellar organelle and consists of four rings (L,P,S, and M) mounted on a central rod.

It is found in the periplasm. The protein resides in the bacterial flagellum basal body. Assembles around the rod to form the L-ring and probably protects the motor/basal body from shearing forces during rotation. The chain is Flagellar P-ring protein from Rhizobium etli (strain CIAT 652).